A 320-amino-acid polypeptide reads, in one-letter code: uncharacterized protein (320 aa).

This is an uncharacterized protein from Orgyia pseudotsugata (Douglas-fir tussock moth).